The following is a 422-amino-acid chain: Retinoic acid receptor RXR-beta-B (422 aa).

Residues 1–89 (MNSLPPSTSA…SGPMLSQKRM (89 aa)) are modulating. 2 consecutive NR C4-type zinc fingers follow at residues 90–110 (CAIC…CEGC) and 126–150 (CRDN…YQKC). A DNA-binding region (nuclear receptor) is located at residues 90–155 (CAICGDRSSG…RYQKCLAMGM (66 aa)). Residues 156 to 178 (KREAVQEERQKNKERDGDYECSS) are hinge. Over residues 161-173 (QEERQKNKERDGD) the composition is skewed to basic and acidic residues. Residues 161-182 (QEERQKNKERDGDYECSSSANE) are disordered. Residues 181–421 (NEEMPVEKIL…TFLMEMLESP (241 aa)) form the NR LBD domain.

The protein belongs to the nuclear hormone receptor family. NR2 subfamily. As to quaternary structure, homodimer. Heterodimer; with a rar molecule. Binds DNA preferentially as a rar/rxr heterodimer. Heterodimerizes with rarga. In terms of tissue distribution, shows uniform expression from the blastula to mid-gastrula stages. At 12 hours post-fertilization (hpf), expressed ubiquitously but more weakly. At 24 hpf, restricted to the ventral diencephalon, pharangeal endoderm and trunk and tail mesoderm; mesoderm expression is in medial cells of each somite along the dorsoventral axis, forming stripes. At 48 hpf, expressed in forebrain, eye, midbrain and anterior hindbrain.

The protein localises to the nucleus. In terms of biological role, receptor for retinoic acid. Retinoic acid receptors bind as heterodimers to their target response elements in response to their ligands, all-trans or 9-cis retinoic acid, and regulate gene expression in various biological processes. The rar/rxr heterodimers bind to the retinoic acid response elements (RARE) composed of tandem 5'-AGGTCA-3' sites known as DR1-DR5. The high affinity ligand for rxrs is 9-cis retinoic acid. This Danio rerio (Zebrafish) protein is Retinoic acid receptor RXR-beta-B (rxrbb).